A 657-amino-acid polypeptide reads, in one-letter code: Pentatricopeptide repeat-containing protein CRR2, chloroplastic (657 aa).

The transit peptide at 1 to 51 directs the protein to the chloroplast; the sequence is MFLSHPPQVIQPTYHTVNFLPRSPLKPPSCSVALNNPSISSGAGAKISNNQ. PPR repeat units follow at residues 45–75, 76–110, 111–141, 142–176, 177–215, 216–246, 247–277, 284–318, 319–349, 350–384, 385–420, and 421–451; these read AKIS…ESSP, SQQT…GSDQ, DPFL…TRKR, TIYV…GVES, DRFT…GYSS, HVYI…MPVR, NVVS…MMRE, NSVT…GLDS, ILPV…MHDR, DVVS…GASP, TPVT…GIKP, and QIEH…MRTE. The tract at residues 456 to 531 is type E motif; sequence VWGSLLGSCR…LPGRCWMEVR (76 aa). A type E(+) motif region spans residues 532–562; the sequence is RKMYSFVSVDEFNPLMEQIHAFLVKLAEDMK. Residues 563-657 form a type DYW motif region; that stretch reads EKGYIPQTKG…NGVCSCGDYW (95 aa).

It belongs to the PPR family. PCMP-H subfamily.

The protein resides in the plastid. It is found in the chloroplast. Required for the intergenic processing between chloroplast rsp7 and ndhB transcripts. Necessary for chloroplast NADH dehydrogenase-like (NDH) complex-dependent cyclic electron transport around PSI (CET). This chain is Pentatricopeptide repeat-containing protein CRR2, chloroplastic, found in Arabidopsis thaliana (Mouse-ear cress).